Here is a 356-residue protein sequence, read N- to C-terminus: HORMA domain-containing protein 1 (356 aa).

The region spanning 24 to 225 is the HORMA domain; sequence QQSLVLVKKL…TPFHSIKMNV (202 aa). 2 disordered regions span residues 282–305 and 333–356; these read ETQE…PKMD and QLEF…SVPK. A compositionally biased stretch (basic and acidic residues) spans 288–298; the sequence is EQPHRHTKEDF. The span at 347-356 shows a compositional bias: basic residues; sequence PKRRKVSVPK.

The protein resides in the nucleus. The protein localises to the chromosome. Plays a key role in meiotic progression by ensuring that sufficient numbers of processed DNA double-strand breaks (DSBs) are available for successful homology search, promoting synaptonemal-complex formation independently and playing key role in the male mid-pachytene checkpoint and the female meiotic prophase checkpoint. In Danio rerio (Zebrafish), this protein is HORMA domain-containing protein 1 (hormad1).